A 465-amino-acid chain; its full sequence is Ribulose bisphosphate carboxylase large chain (465 aa).

At lysine 4 the chain carries N6,N6,N6-trimethyllysine. Residues asparagine 113 and threonine 163 each contribute to the substrate site. Lysine 165 functions as the Proton acceptor in the catalytic mechanism. Lysine 167 is a binding site for substrate. The Mg(2+) site is built by lysine 191, aspartate 193, and glutamate 194. Lysine 191 carries the N6-carboxylysine modification. The active-site Proton acceptor is histidine 284. Residues arginine 285, histidine 317, and serine 369 each contribute to the substrate site.

Belongs to the RuBisCO large chain family. Type I subfamily. As to quaternary structure, heterohexadecamer of 8 large chains and 8 small chains; disulfide-linked. The disulfide link is formed within the large subunit homodimers. Mg(2+) serves as cofactor. Post-translationally, the disulfide bond which can form in the large chain dimeric partners within the hexadecamer appears to be associated with oxidative stress and protein turnover.

It localises to the plastid. It is found in the chloroplast. It carries out the reaction 2 (2R)-3-phosphoglycerate + 2 H(+) = D-ribulose 1,5-bisphosphate + CO2 + H2O. It catalyses the reaction D-ribulose 1,5-bisphosphate + O2 = 2-phosphoglycolate + (2R)-3-phosphoglycerate + 2 H(+). In terms of biological role, ruBisCO catalyzes two reactions: the carboxylation of D-ribulose 1,5-bisphosphate, the primary event in carbon dioxide fixation, as well as the oxidative fragmentation of the pentose substrate in the photorespiration process. Both reactions occur simultaneously and in competition at the same active site. This is Ribulose bisphosphate carboxylase large chain from Nepenthes alata (Winged pitcher plant).